The following is a 336-amino-acid chain: Glucokinase (336 aa).

12–17 contributes to the ATP binding site; the sequence is ADIGGT.

Belongs to the bacterial glucokinase family.

It is found in the cytoplasm. The enzyme catalyses D-glucose + ATP = D-glucose 6-phosphate + ADP + H(+). The chain is Glucokinase from Helicobacter pylori (strain P12).